The sequence spans 70 residues: Protein SlyX homolog (70 aa).

It belongs to the SlyX family.

This Rhizobium meliloti (strain 1021) (Ensifer meliloti) protein is Protein SlyX homolog.